Here is a 217-residue protein sequence, read N- to C-terminus: ATP-dependent Clp protease proteolytic subunit (217 aa).

Ser121 acts as the Nucleophile in catalysis. Residue His146 is part of the active site.

It belongs to the peptidase S14 family. In terms of assembly, fourteen ClpP subunits assemble into 2 heptameric rings which stack back to back to give a disk-like structure with a central cavity, resembling the structure of eukaryotic proteasomes.

The protein resides in the cytoplasm. The catalysed reaction is Hydrolysis of proteins to small peptides in the presence of ATP and magnesium. alpha-casein is the usual test substrate. In the absence of ATP, only oligopeptides shorter than five residues are hydrolyzed (such as succinyl-Leu-Tyr-|-NHMec, and Leu-Tyr-Leu-|-Tyr-Trp, in which cleavage of the -Tyr-|-Leu- and -Tyr-|-Trp bonds also occurs).. Its function is as follows. Cleaves peptides in various proteins in a process that requires ATP hydrolysis. Has a chymotrypsin-like activity. Plays a major role in the degradation of misfolded proteins. The chain is ATP-dependent Clp protease proteolytic subunit from Burkholderia vietnamiensis (strain G4 / LMG 22486) (Burkholderia cepacia (strain R1808)).